The chain runs to 249 residues: 2,3-bisphosphoglycerate-dependent phosphoglycerate mutase (249 aa).

Residues 9-16 (RHGQSQWN), 22-23 (TG), R61, 88-91 (ERHY), K99, 115-116 (RR), and 184-185 (GN) each bind substrate. Residue H10 is the Tele-phosphohistidine intermediate of the active site. The active-site Proton donor/acceptor is the E88.

This sequence belongs to the phosphoglycerate mutase family. BPG-dependent PGAM subfamily. In terms of assembly, homodimer.

The catalysed reaction is (2R)-2-phosphoglycerate = (2R)-3-phosphoglycerate. The protein operates within carbohydrate degradation; glycolysis; pyruvate from D-glyceraldehyde 3-phosphate: step 3/5. Functionally, catalyzes the interconversion of 2-phosphoglycerate and 3-phosphoglycerate. This is 2,3-bisphosphoglycerate-dependent phosphoglycerate mutase from Xanthomonas campestris pv. campestris (strain 8004).